The chain runs to 836 residues: Translation initiation factor IF-2 (836 aa).

The tract at residues 1–234 (MSDTDGKKPL…SLAAMKRKQE (234 aa)) is disordered. Residues 18-27 (SGQVKQSFSH) are compositionally biased toward polar residues. Over residues 50 to 60 (SGSSTTTSSPS) the composition is skewed to low complexity. The span at 88 to 156 (KLREVEDAKR…ATRRAEEAKR (69 aa)) shows a compositional bias: basic and acidic residues. The span at 167 to 176 (PAESRASAPP) shows a compositional bias: low complexity. Residues 185 to 206 (SRKEREREADRDRTTKKDDSRR) are compositionally biased toward basic and acidic residues. The region spanning 333–501 (PRPPIITIMG…NIALQAEILD (169 aa)) is the tr-type G domain. The segment at 342-349 (GHVDHGKT) is G1. Residue 342 to 349 (GHVDHGKT) participates in GTP binding. The segment at 367-371 (GITQH) is G2. Residues 389 to 392 (DTPG) form a G3 region. GTP-binding positions include 389–393 (DTPGH) and 443–446 (NKID). Positions 443-446 (NKID) are G4. A G5 region spans residues 479-481 (SAK).

This sequence belongs to the TRAFAC class translation factor GTPase superfamily. Classic translation factor GTPase family. IF-2 subfamily.

Its subcellular location is the cytoplasm. Its function is as follows. One of the essential components for the initiation of protein synthesis. Protects formylmethionyl-tRNA from spontaneous hydrolysis and promotes its binding to the 30S ribosomal subunits. Also involved in the hydrolysis of GTP during the formation of the 70S ribosomal complex. The polypeptide is Translation initiation factor IF-2 (Cereibacter sphaeroides (strain ATCC 17029 / ATH 2.4.9) (Rhodobacter sphaeroides)).